A 208-amino-acid chain; its full sequence is Small ribosomal subunit protein uS4 (208 aa).

The region spanning 97–158 (TRLDNVIYRM…RAQKYLCVQE (62 aa)) is the S4 RNA-binding domain.

It belongs to the universal ribosomal protein uS4 family. As to quaternary structure, part of the 30S ribosomal subunit. Contacts protein S5. The interaction surface between S4 and S5 is involved in control of translational fidelity.

In terms of biological role, one of the primary rRNA binding proteins, it binds directly to 16S rRNA where it nucleates assembly of the body of the 30S subunit. Its function is as follows. With S5 and S12 plays an important role in translational accuracy. In Xylella fastidiosa (strain M23), this protein is Small ribosomal subunit protein uS4.